Here is a 137-residue protein sequence, read N- to C-terminus: Large ribosomal subunit protein uL16 (137 aa).

The protein belongs to the universal ribosomal protein uL16 family. As to quaternary structure, part of the 50S ribosomal subunit.

Its function is as follows. Binds 23S rRNA and is also seen to make contacts with the A and possibly P site tRNAs. The chain is Large ribosomal subunit protein uL16 from Psychrobacter sp. (strain PRwf-1).